The primary structure comprises 374 residues: MATDTAVTGAPETTELRLASGNGPVTRTVLRTPVRDALPSEVPLIDISPIFSTCVADRKAVARKIHDAATNIGFFYIQNHRVPSQDIDLAYSASQDFFRQEMEVKVEADAKDGPFDSGYRGPGTQRVNPTEGADLRETYSILYDPMLDPTVPDPANIPEPASRFLHLGRAPFESTATLPHFKDAFVRYFQACLVLARALTRAFALSLDLPESAFDGKVQYPDASLEINFYPPISTGHAVSAPGDADTRVSIGSHTDFLLFTILWQDSNGGLQVLNREGQWIRAIPVEGTFVVNIGDYLQRVTNDKYVSTVHRAQNFSGRERVSMPFFWGFGMHESCQVLRNCCGEDEKSKYDEVKCVDWVSRRLGNLFDLSDKG.

A disordered region spans residues 111–130 (KDGPFDSGYRGPGTQRVNPT). The 111-residue stretch at 220–330 (YPDASLEINF…RVSMPFFWGF (111 aa)) folds into the Fe2OG dioxygenase domain. Residues H254, D256, and H311 each contribute to the Fe cation site. R321 serves as a coordination point for 2-oxoglutarate.

Belongs to the iron/ascorbate-dependent oxidoreductase family. It depends on Fe(2+) as a cofactor.

It carries out the reaction peramine + 2-oxoglutarate + O2 = 8-hydroxyperamine + succinate + CO2. The protein operates within secondary metabolite biosynthesis. In terms of biological role, 2-oxoglutarate-Fe(II) type oxidoreductase; part of the gene cluster that mediates the biosynthesis of pyrrolopyrazines, secondary metabolites showing insecticidal activity. Within the pathway, ppzC uses peramine as substrate for hydroxylation to yield the novel analog 8-hydroxyperamine. The single multifunctional NRPS ppzA is sufficient to produce peramine via condensation of 1-pyrroline-5-carboxylate and arginine, N-methylation of the alpha-amino group of arginine and reduction of the thioester and the cyclization to form an iminium ion resulting in release from the peptide synthetase. Deprotonation of this intermediate and oxidation of the pyrroline ring would give rise to peramine. In Epichloe species that produce only peramine, the peramine synthetase gene is not localized in a gene cluster, in contrast to Metarhizium species that contain additional pyrrolopyrazine biosynthesis genes. The 2-oxoglutarate-Fe(II) type oxidoreductase ppzC hydroxylates peramine to yield the newly identified compound 8-hydroxyperamine whereas ppzD converts L-proline into trans-4-hydroxy-L-proline, a precursor of peramine biosynthesis. The chain is 2-oxoglutarate-Fe(II) type oxidoreductase ppzC from Metarhizium rileyi (strain RCEF 4871) (Nomuraea rileyi).